Here is a 968-residue protein sequence, read N- to C-terminus: Phosphoenolpyruvate carboxylase (968 aa).

S11 carries the post-translational modification Phosphoserine. Active-site residues include H172 and K602.

The protein belongs to the PEPCase type 1 family. Homotetramer. Requires Mg(2+) as cofactor.

The protein localises to the cytoplasm. It catalyses the reaction oxaloacetate + phosphate = phosphoenolpyruvate + hydrogencarbonate. Its activity is regulated as follows. By light-reversible phosphorylation. Functionally, through the carboxylation of phosphoenolpyruvate (PEP) it forms oxaloacetate, a four-carbon dicarboxylic acid source for the tricarboxylic acid cycle. This is Phosphoenolpyruvate carboxylase from Phaseolus vulgaris (Kidney bean).